A 234-amino-acid polypeptide reads, in one-letter code: Glutathione S-transferase 1 (234 aa).

Residues 3–90 (LPIIKVHWLD…YVLQHFDHSH (88 aa)) enclose the GST N-terminal domain. In terms of domain architecture, GST C-terminal spans 96 to 234 (DADIADQINY…EKARALGSNF (139 aa)).

Belongs to the GST superfamily. In terms of assembly, homodimer.

The protein localises to the endoplasmic reticulum membrane. It carries out the reaction RX + glutathione = an S-substituted glutathione + a halide anion + H(+). The sequence is that of Glutathione S-transferase 1 (GTT1) from Saccharomyces cerevisiae (strain ATCC 204508 / S288c) (Baker's yeast).